A 226-amino-acid polypeptide reads, in one-letter code: ATP synthase F(0) complex subunit a (226 aa).

The next 6 membrane-spanning stretches (helical) occupy residues 6–26, 68–88, 97–117, 138–158, 164–184, and 189–209; these read FASFAAPTILGLPAAVLIILF, WSLMLVSLIIFITTTNLLGLL, QLSMNLAMAIPLWAGAVVMGF, IPMLVIIETISLLIQPMALAV, ITAGHLLMHLIGSATLALSTI, and ALIIFTILILLTILEIAVALI.

It belongs to the ATPase A chain family. As to quaternary structure, component of the ATP synthase complex composed at least of ATP5F1A/subunit alpha, ATP5F1B/subunit beta, ATP5MC1/subunit c (homooctomer), MT-ATP6/subunit a, MT-ATP8/subunit 8, ATP5ME/subunit e, ATP5MF/subunit f, ATP5MG/subunit g, ATP5MK/subunit k, ATP5MJ/subunit j, ATP5F1C/subunit gamma, ATP5F1D/subunit delta, ATP5F1E/subunit epsilon, ATP5PF/subunit F6, ATP5PB/subunit b, ATP5PD/subunit d, ATP5PO/subunit OSCP. ATP synthase complex consists of a soluble F(1) head domain (subunits alpha(3) and beta(3)) - the catalytic core - and a membrane F(0) domain - the membrane proton channel (subunits c, a, 8, e, f, g, k and j). These two domains are linked by a central stalk (subunits gamma, delta, and epsilon) rotating inside the F1 region and a stationary peripheral stalk (subunits F6, b, d, and OSCP). Interacts with DNAJC30; interaction is direct.

It is found in the mitochondrion inner membrane. It carries out the reaction H(+)(in) = H(+)(out). Subunit a, of the mitochondrial membrane ATP synthase complex (F(1)F(0) ATP synthase or Complex V) that produces ATP from ADP in the presence of a proton gradient across the membrane which is generated by electron transport complexes of the respiratory chain. ATP synthase complex consist of a soluble F(1) head domain - the catalytic core - and a membrane F(1) domain - the membrane proton channel. These two domains are linked by a central stalk rotating inside the F(1) region and a stationary peripheral stalk. During catalysis, ATP synthesis in the catalytic domain of F(1) is coupled via a rotary mechanism of the central stalk subunits to proton translocation. With the subunit c (ATP5MC1), forms the proton-conducting channel in the F(0) domain, that contains two crucial half-channels (inlet and outlet) that facilitate proton movement from the mitochondrial intermembrane space (IMS) into the matrix. Protons are taken up via the inlet half-channel and released through the outlet half-channel, following a Grotthuss mechanism. In Pan troglodytes (Chimpanzee), this protein is ATP synthase F(0) complex subunit a.